Here is an 83-residue protein sequence, read N- to C-terminus: Cobrotoxin (83 aa).

The signal sequence occupies residues 1–21 (MKTLLLTLLVVTIVCLDLGYT). Disulfide bonds link Cys24–Cys45, Cys38–Cys62, Cys64–Cys75, and Cys76–Cys81.

This sequence belongs to the three-finger toxin family. Short-chain subfamily. Type I alpha-neurotoxin sub-subfamily. Expressed by the venom gland.

Its subcellular location is the secreted. In terms of biological role, binds to muscle nicotinic acetylcholine receptor (nAChR) and inhibit acetylcholine from binding to the receptor, thereby impairing neuromuscular transmission. Has a higher toxicity than cobrotoxin-b. In vivo, when tested on rat arthritis models, shows anti-inflammation and immunosuppression effects. The polypeptide is Cobrotoxin (Naja atra (Chinese cobra)).